Consider the following 841-residue polypeptide: Translation initiation factor IF-2 (841 aa).

Residues 341–508 (NRAPVVTIMG…AILLQAEILE (168 aa)) form the tr-type G domain. The tract at residues 350 to 357 (GHVDHGKT) is G1. Residue 350–357 (GHVDHGKT) participates in GTP binding. The tract at residues 375 to 379 (GITQC) is G2. Positions 396–399 (DTPG) are G3. GTP is bound by residues 396–400 (DTPGH) and 450–453 (NKID). Positions 450–453 (NKID) are G4. The interval 486-488 (SAK) is G5.

Belongs to the TRAFAC class translation factor GTPase superfamily. Classic translation factor GTPase family. IF-2 subfamily.

It is found in the cytoplasm. Functionally, one of the essential components for the initiation of protein synthesis. Protects formylmethionyl-tRNA from spontaneous hydrolysis and promotes its binding to the 30S ribosomal subunits. Also involved in the hydrolysis of GTP during the formation of the 70S ribosomal complex. This Wigglesworthia glossinidia brevipalpis protein is Translation initiation factor IF-2.